The following is a 98-amino-acid chain: uncharacterized protein (98 aa).

Residues 77 to 98 (SERAGEEVPPLAVAGSDDGHDH) are disordered.

It to M.tuberculosis Rv1991c and Rv3269.

This is an uncharacterized protein from Mycobacterium bovis (strain ATCC BAA-935 / AF2122/97).